A 274-amino-acid polypeptide reads, in one-letter code: tRNA-cytidine(32) 2-sulfurtransferase (274 aa).

A PP-loop motif motif is present at residues serine 40 to serine 45. [4Fe-4S] cluster is bound by residues cysteine 115, cysteine 118, and cysteine 206.

This sequence belongs to the TtcA family. As to quaternary structure, homodimer. Mg(2+) serves as cofactor. It depends on [4Fe-4S] cluster as a cofactor.

It is found in the cytoplasm. The enzyme catalyses cytidine(32) in tRNA + S-sulfanyl-L-cysteinyl-[cysteine desulfurase] + AH2 + ATP = 2-thiocytidine(32) in tRNA + L-cysteinyl-[cysteine desulfurase] + A + AMP + diphosphate + H(+). It participates in tRNA modification. Functionally, catalyzes the ATP-dependent 2-thiolation of cytidine in position 32 of tRNA, to form 2-thiocytidine (s(2)C32). The sulfur atoms are provided by the cysteine/cysteine desulfurase (IscS) system. In Pseudomonas putida (strain ATCC 47054 / DSM 6125 / CFBP 8728 / NCIMB 11950 / KT2440), this protein is tRNA-cytidine(32) 2-sulfurtransferase.